Here is a 153-residue protein sequence, read N- to C-terminus: Small ribosomal subunit protein bS16 (153 aa).

The protein belongs to the bacterial ribosomal protein bS16 family.

This is Small ribosomal subunit protein bS16 from Leifsonia xyli subsp. xyli (strain CTCB07).